The primary structure comprises 518 residues: Bifunctional purine biosynthesis protein PurH (518 aa).

Residues 1-144 form the MGS-like domain; the sequence is MNRRAVLSVS…KNQERVSIVV (144 aa).

The protein belongs to the PurH family.

The catalysed reaction is (6R)-10-formyltetrahydrofolate + 5-amino-1-(5-phospho-beta-D-ribosyl)imidazole-4-carboxamide = 5-formamido-1-(5-phospho-D-ribosyl)imidazole-4-carboxamide + (6S)-5,6,7,8-tetrahydrofolate. It carries out the reaction IMP + H2O = 5-formamido-1-(5-phospho-D-ribosyl)imidazole-4-carboxamide. Its pathway is purine metabolism; IMP biosynthesis via de novo pathway; 5-formamido-1-(5-phospho-D-ribosyl)imidazole-4-carboxamide from 5-amino-1-(5-phospho-D-ribosyl)imidazole-4-carboxamide (10-formyl THF route): step 1/1. The protein operates within purine metabolism; IMP biosynthesis via de novo pathway; IMP from 5-formamido-1-(5-phospho-D-ribosyl)imidazole-4-carboxamide: step 1/1. The protein is Bifunctional purine biosynthesis protein PurH of Desulfitobacterium hafniense (strain DSM 10664 / DCB-2).